The following is a 494-amino-acid chain: Glycosyl hydrolase family 109 protein (494 aa).

Residues 1 to 32 (MNDDARPAPEPQDIPPHSGAADEVNRQDPSRR) form a disordered region. The segment at residues 1 to 58 (MNDDARPAPEPQDIPPHSGAADEVNRQDPSRRSVLWTTAGVAGAGLGLGALGAGTASA) is a signal peptide (tat-type signal). NAD(+) contacts are provided by residues 104-105 (NR), Asp-126, 175-178 (WELH), 195-196 (EC), and Asn-224. Substrate is bound by residues Tyr-253, Arg-272, 284-287 (YPNH), and Tyr-366. Tyr-284 contributes to the NAD(+) binding site.

The protein belongs to the Gfo/Idh/MocA family. Glycosyl hydrolase 109 subfamily. NAD(+) is required as a cofactor. Post-translationally, predicted to be exported by the Tat system. The position of the signal peptide cleavage has not been experimentally proven.

In terms of biological role, glycosidase. The protein is Glycosyl hydrolase family 109 protein of Streptomyces filamentosus (Streptomyces roseosporus).